The chain runs to 312 residues: Dipeptide transport ATP-binding protein DppF (312 aa).

In terms of domain architecture, ABC transporter spans 10–255 (IKNLDLTFNK…PIHPYTKSLL (246 aa)). 45 to 52 (GESGSGKT) contributes to the ATP binding site.

The protein belongs to the ABC transporter superfamily. As to quaternary structure, the complex is composed of two ATP-binding proteins (DppD and DppF), two transmembrane proteins (DppB and DppC) and a solute-binding protein (DppA).

The protein resides in the cell membrane. It carries out the reaction a dipeptide(out) + ATP + H2O = a dipeptide(in) + ADP + phosphate + H(+). Part of the ABC transporter DppABCDF involved in dipeptide transport. Responsible for energy coupling to the transport system. The chain is Dipeptide transport ATP-binding protein DppF from Lactococcus lactis subsp. cremoris (strain MG1363).